Here is a 227-residue protein sequence, read N- to C-terminus: 7-cyano-7-deazaguanine synthase (227 aa).

16-26 (FSGGQDSTTCL) is an ATP binding site. Cys194, Cys202, Cys205, and Cys208 together coordinate Zn(2+).

The protein belongs to the QueC family. Zn(2+) serves as cofactor.

It catalyses the reaction 7-carboxy-7-deazaguanine + NH4(+) + ATP = 7-cyano-7-deazaguanine + ADP + phosphate + H2O + H(+). Its pathway is purine metabolism; 7-cyano-7-deazaguanine biosynthesis. In terms of biological role, catalyzes the ATP-dependent conversion of 7-carboxy-7-deazaguanine (CDG) to 7-cyano-7-deazaguanine (preQ(0)). The chain is 7-cyano-7-deazaguanine synthase from Haemophilus influenzae (strain PittEE).